The following is a 377-amino-acid chain: Transmembrane 6 superfamily member 2 (377 aa).

9 helical membrane-spanning segments follow: residues isoleucine 10 to leucine 30, leucine 34 to leucine 54, proline 63 to leucine 83, phenylalanine 111 to isoleucine 131, phenylalanine 140 to isoleucine 160, proline 170 to phenylalanine 190, leucine 219 to valine 239, methionine 269 to phenylalanine 289, and threonine 332 to tyrosine 352. EXPERA domains lie at tyrosine 61 to glycine 186 and alanine 217 to alanine 351.

It belongs to the TM6SF family. In terms of tissue distribution, substantial expression in liver and intestine, whereas all other tissues analyzed show low levels.

The protein resides in the endoplasmic reticulum membrane. The protein localises to the endoplasmic reticulum-Golgi intermediate compartment membrane. In terms of biological role, regulator of liver fat metabolism influencing triglyceride secretion and hepatic lipid droplet content. May function as sterol isomerase. In Homo sapiens (Human), this protein is Transmembrane 6 superfamily member 2 (TM6SF2).